We begin with the raw amino-acid sequence, 105 residues long: Vitelline membrane protein Vm32E (105 aa).

The first 17 residues, 1–17 (MHFIALIVAVCVAFAGA), serve as a signal peptide directing secretion. The VM domain occupies 25 to 62 (GIAAPPCPKNYLFSCQPNLVPAPCAQEAASYGSAGAYA).

The protein belongs to the vitelline membrane family.

It is found in the secreted. Major early eggshell protein. The protein is Vitelline membrane protein Vm32E of Drosophila ananassae (Fruit fly).